The primary structure comprises 227 residues: Cytochrome c oxidase subunit 2 (227 aa).

At Met-1–Ser-14 the chain is on the mitochondrial intermembrane side. A helical transmembrane segment spans residues Pro-15–Met-45. The Mitochondrial matrix segment spans residues Leu-46–Gln-59. Residues Glu-60–Met-87 traverse the membrane as a helical segment. The Mitochondrial intermembrane portion of the chain corresponds to Asp-88–Val-227. Cu cation-binding residues include His-161, Cys-196, Glu-198, Cys-200, His-204, and Met-207. A Mg(2+)-binding site is contributed by Glu-198.

It belongs to the cytochrome c oxidase subunit 2 family. As to quaternary structure, component of the cytochrome c oxidase (complex IV, CIV), a multisubunit enzyme composed of 14 subunits. The complex is composed of a catalytic core of 3 subunits MT-CO1, MT-CO2 and MT-CO3, encoded in the mitochondrial DNA, and 11 supernumerary subunits COX4I, COX5A, COX5B, COX6A, COX6B, COX6C, COX7A, COX7B, COX7C, COX8 and NDUFA4, which are encoded in the nuclear genome. The complex exists as a monomer or a dimer and forms supercomplexes (SCs) in the inner mitochondrial membrane with NADH-ubiquinone oxidoreductase (complex I, CI) and ubiquinol-cytochrome c oxidoreductase (cytochrome b-c1 complex, complex III, CIII), resulting in different assemblies (supercomplex SCI(1)III(2)IV(1) and megacomplex MCI(2)III(2)IV(2)). Found in a complex with TMEM177, COA6, COX18, COX20, SCO1 and SCO2. Interacts with TMEM177 in a COX20-dependent manner. Interacts with COX20. Interacts with COX16. Requires Cu cation as cofactor.

It localises to the mitochondrion inner membrane. The catalysed reaction is 4 Fe(II)-[cytochrome c] + O2 + 8 H(+)(in) = 4 Fe(III)-[cytochrome c] + 2 H2O + 4 H(+)(out). In terms of biological role, component of the cytochrome c oxidase, the last enzyme in the mitochondrial electron transport chain which drives oxidative phosphorylation. The respiratory chain contains 3 multisubunit complexes succinate dehydrogenase (complex II, CII), ubiquinol-cytochrome c oxidoreductase (cytochrome b-c1 complex, complex III, CIII) and cytochrome c oxidase (complex IV, CIV), that cooperate to transfer electrons derived from NADH and succinate to molecular oxygen, creating an electrochemical gradient over the inner membrane that drives transmembrane transport and the ATP synthase. Cytochrome c oxidase is the component of the respiratory chain that catalyzes the reduction of oxygen to water. Electrons originating from reduced cytochrome c in the intermembrane space (IMS) are transferred via the dinuclear copper A center (CU(A)) of subunit 2 and heme A of subunit 1 to the active site in subunit 1, a binuclear center (BNC) formed by heme A3 and copper B (CU(B)). The BNC reduces molecular oxygen to 2 water molecules using 4 electrons from cytochrome c in the IMS and 4 protons from the mitochondrial matrix. This Vulpes corsac (Corsac fox) protein is Cytochrome c oxidase subunit 2 (MT-CO2).